Consider the following 419-residue polypeptide: Nodulation protein NoeE (419 aa).

Required for the formation of sulfated nod factor. Proposed to transfer activated sulfate (PAPS) to the fucose of the nod factor. In Sinorhizobium fredii (strain NBRC 101917 / NGR234), this protein is Nodulation protein NoeE (noeE).